Here is a 398-residue protein sequence, read N- to C-terminus: Acetate kinase 1 (398 aa).

Asn10 lines the Mg(2+) pocket. Lys17 contributes to the ATP binding site. Arg89 contacts substrate. Asp146 functions as the Proton donor/acceptor in the catalytic mechanism. Residues 206–210, 281–283, and 329–333 contribute to the ATP site; these read HLGNG, DCR, and GIGEN. Mg(2+) is bound at residue Glu384.

The protein belongs to the acetokinase family. Homodimer. The cofactor is Mg(2+). Requires Mn(2+) as cofactor.

It localises to the cytoplasm. It catalyses the reaction acetate + ATP = acetyl phosphate + ADP. Its pathway is metabolic intermediate biosynthesis; acetyl-CoA biosynthesis; acetyl-CoA from acetate: step 1/2. In terms of biological role, catalyzes the formation of acetyl phosphate from acetate and ATP. Can also catalyze the reverse reaction. In Neisseria meningitidis serogroup A / serotype 4A (strain DSM 15465 / Z2491), this protein is Acetate kinase 1.